Reading from the N-terminus, the 249-residue chain is Probable transcriptional regulatory protein LBL_2537 (249 aa).

This sequence belongs to the TACO1 family.

The protein resides in the cytoplasm. The sequence is that of Probable transcriptional regulatory protein LBL_2537 from Leptospira borgpetersenii serovar Hardjo-bovis (strain L550).